Here is a 366-residue protein sequence, read N- to C-terminus: Ribosome-binding ATPase YchF (366 aa).

Residues 3–259 (LTAGIVGLPN…LEGEEKQMFL (257 aa)) form the OBG-type G domain. Position 12–17 (12–17 (NVGKST)) interacts with ATP. Positions 16 and 36 each coordinate Mg(2+). The 84-residue stretch at 281–364 (GLATYFTAGE…QDGDVIHFRF (84 aa)) folds into the TGS domain.

It belongs to the TRAFAC class OBG-HflX-like GTPase superfamily. OBG GTPase family. YchF/OLA1 subfamily. Requires Mg(2+) as cofactor.

Its function is as follows. ATPase that binds to both the 70S ribosome and the 50S ribosomal subunit in a nucleotide-independent manner. The protein is Ribosome-binding ATPase YchF of Bacillus subtilis (strain 168).